The sequence spans 123 residues: CD59A glycoprotein (123 aa).

The signal sequence occupies residues 1-23; sequence MRAQRGLILLLLLLAVFCSTAVS. The 73-residue stretch at 24 to 96 folds into the UPAR/Ly6 domain; it reads LTCYHCFQPV…CCQFNLCNKS (73 aa). Disulfide bonds link Cys26–Cys50, Cys29–Cys37, Cys43–Cys63, Cys69–Cys87, and Cys88–Cys93. A glycan (N-linked (GlcNAc...) asparagine) is linked at Asn40. An N-linked (GlcNAc...) asparagine glycan is attached at Asn94. Positions 97–123 are cleaved as a propeptide — removed in mature form; it reads DGSLGKTPLLGTSVLVAILNLCFLSHL.

As to quaternary structure, interacts with T-cell surface antigen CD2. In terms of processing, N- and O-glycosylated. In terms of tissue distribution, expressed in all tissues examined (liver, kidney, spleen, thymus, brain and heart). Low levels in thymus. Also expressed in mononuclear cells, erythrocytes and platelets. Barely detected in neutrophils.

The protein resides in the cell membrane. The protein localises to the secreted. Functionally, potent inhibitor of the complement membrane attack complex (MAC) action, which protects self-cells from damage during complement activation. Acts by binding to the beta-haipins of C8 (C8A and C8B) components of the assembling MAC, forming an intermolecular beta-sheet that prevents incorporation of the multiple copies of C9 required for complete formation of the osmolytic pore. The chain is CD59A glycoprotein from Mus musculus (Mouse).